Consider the following 402-residue polypeptide: Serine--glyoxylate aminotransferase (402 aa).

Lysine 201 is subject to N6-(pyridoxal phosphate)lysine.

This sequence belongs to the class-V pyridoxal-phosphate-dependent aminotransferase family. Requires pyridoxal 5'-phosphate as cofactor.

It carries out the reaction glyoxylate + L-serine = 3-hydroxypyruvate + glycine. It participates in one-carbon metabolism; formaldehyde assimilation via serine pathway. The chain is Serine--glyoxylate aminotransferase from Methylorubrum extorquens (strain ATCC 14718 / DSM 1338 / JCM 2805 / NCIMB 9133 / AM1) (Methylobacterium extorquens).